We begin with the raw amino-acid sequence, 1119 residues long: Transcriptional repressor NF-X1 homolog (1119 aa).

A disordered region spans residues 1 to 214 (MADTEGTSSS…EPLTEEETKI (214 aa)). Over residues 7–17 (TSSSIPTSTNS) the composition is skewed to low complexity. A compositionally biased stretch (basic residues) spans 18-29 (SRHRASRGRGGR). Low complexity predominate over residues 84–98 (ANFTFNPNAATFNPA). Positions 113–128 (GASTHSNQNSRQQEPS) are enriched in polar residues. Residues 143 to 154 (RQLEIQEQRGDS) are compositionally biased toward basic and acidic residues. Residues 157 to 167 (QNQSRQNNRNQ) are compositionally biased toward low complexity. Polar residues predominate over residues 174–193 (ANQQNKSVQNPSRNPGNSRR). Basic and acidic residues predominate over residues 198 to 214 (RRREQKEEPLTEEETKI). The RING-type; degenerate zinc finger occupies 235-287 (CAICYTRITTRQGVWSCKTCYHIFHISTGCITDWARSSRDKEGANTWRCPTCQ). 9 consecutive NF-X1-type zinc fingers follow at residues 330–348 (CPHP…ECKL), 383–402 (CGQH…ECTV), 439–458 (CGIH…ECET), 500–523 (CGTP…PCNL), 565–584 (CGMH…FCLQ), 592–611 (CGIH…PCLQ), 649–668 (CDHS…PCTQ), 703–726 (CGVH…KCTK), and 735–756 (CEHP…PCKA). The R3H domain occupies 867 to 937 (IDFVKSVEKI…KRSIVLTAVR (71 aa)). 2 disordered regions span residues 1024–1047 (VDSD…PKDW) and 1078–1119 (AAKK…ELLE). Positions 1032–1041 (NVPTTSNLVS) are enriched in polar residues. Acidic residues predominate over residues 1086–1097 (PTWEDQCDEDAP).

The protein belongs to the NFX1 family.

It localises to the nucleus. Functionally, may play a role in transcription regulation. The sequence is that of Transcriptional repressor NF-X1 homolog (nfx-1) from Caenorhabditis elegans.